Here is a 251-residue protein sequence, read N- to C-terminus: uncharacterized protein (251 aa).

2 disordered regions span residues 1 to 92 (MGRP…PGSA) and 137 to 251 (KPTP…LRTH). The segment covering 69-92 (AEGAPALLGGSPSSGSPGHPPGSA) has biased composition (low complexity). Over residues 155–172 (SESSWQLPQLPAGSTSGS) the composition is skewed to polar residues.

This is an uncharacterized protein from Homo sapiens (Human).